The primary structure comprises 671 residues: DNA ligase (671 aa).

NAD(+) contacts are provided by residues 34–38, 83–84, and Glu-115; these read DAEYD and SL. The active-site N6-AMP-lysine intermediate is Lys-117. NAD(+) contacts are provided by Arg-138, Glu-174, Lys-291, and Lys-315. Residues Cys-409, Cys-412, Cys-427, and Cys-432 each contribute to the Zn(2+) site. Residues 589–671 form the BRCT domain; that stretch reads RSGGPLTGKS…LQMIDTLEEA (83 aa).

The protein belongs to the NAD-dependent DNA ligase family. LigA subfamily. It depends on Mg(2+) as a cofactor. Mn(2+) is required as a cofactor.

The catalysed reaction is NAD(+) + (deoxyribonucleotide)n-3'-hydroxyl + 5'-phospho-(deoxyribonucleotide)m = (deoxyribonucleotide)n+m + AMP + beta-nicotinamide D-nucleotide.. DNA ligase that catalyzes the formation of phosphodiester linkages between 5'-phosphoryl and 3'-hydroxyl groups in double-stranded DNA using NAD as a coenzyme and as the energy source for the reaction. It is essential for DNA replication and repair of damaged DNA. This chain is DNA ligase, found in Syntrophotalea carbinolica (strain DSM 2380 / NBRC 103641 / GraBd1) (Pelobacter carbinolicus).